A 414-amino-acid polypeptide reads, in one-letter code: Serine/threonine transporter SstT (414 aa).

9 helical membrane passes run 19–39, 55–75, 89–109, 148–168, 189–209, 223–243, 297–317, 323–343, and 363–383; these read IIVG…LEPV, FVKG…IAAI, IVML…LASF, ALAT…GIAL, IVHL…AATL, LLLV…PFIV, IPLG…VLTL, LGIP…AVCA, and LFGI…VIGV.

It belongs to the dicarboxylate/amino acid:cation symporter (DAACS) (TC 2.A.23) family.

It localises to the cell inner membrane. The catalysed reaction is L-serine(in) + Na(+)(in) = L-serine(out) + Na(+)(out). It catalyses the reaction L-threonine(in) + Na(+)(in) = L-threonine(out) + Na(+)(out). Functionally, involved in the import of serine and threonine into the cell, with the concomitant import of sodium (symport system). The sequence is that of Serine/threonine transporter SstT from Actinobacillus succinogenes (strain ATCC 55618 / DSM 22257 / CCUG 43843 / 130Z).